A 313-amino-acid chain; its full sequence is uncharacterized protein (313 aa).

This is an uncharacterized protein from Treponema pallidum (strain Nichols).